We begin with the raw amino-acid sequence, 671 residues long: tRNA(Met) cytidine acetyltransferase TmcA (671 aa).

Residues Q180, 202 to 211 (GRGKSALAGQ), and R319 each bind ATP. The region spanning 356 to 531 (QTLWRSEPET…SGCYTAMALL (176 aa)) is the N-acetyltransferase domain. Acetyl-CoA-binding positions include 461–463 (IAV), 468–474 (QREGTGR), E499, and R506.

This sequence belongs to the RNA cytidine acetyltransferase family. TmcA subfamily.

The protein localises to the cytoplasm. The catalysed reaction is cytidine(34) in elongator tRNA(Met) + acetyl-CoA + ATP + H2O = N(4)-acetylcytidine(34) in elongator tRNA(Met) + ADP + phosphate + CoA + H(+). In terms of biological role, catalyzes the formation of N(4)-acetylcytidine (ac(4)C) at the wobble position of tRNA(Met), by using acetyl-CoA as an acetyl donor and ATP (or GTP). The polypeptide is tRNA(Met) cytidine acetyltransferase TmcA (Shigella flexneri serotype 5b (strain 8401)).